The sequence spans 606 residues: Replication protein E1 (606 aa).

The Nuclear localization signal signature appears at 76–78 (KRK). A phosphoserine; by host mark is found at serine 81 and serine 89. Residues 144-307 (GTGDVDIDYL…TVLGHQNAEA (164 aa)) form a DNA-binding region region. Positions 406–556 (VNFIMFLAAL…FPMKSDNTPQ (151 aa)) constitute an SF3 helicase domain. Residue 432–439 (GPPNSGKS) coordinates ATP. Residue lysine 513 forms a Glycyl lysine isopeptide (Lys-Gly) (interchain with G-Cter in SUMO) linkage. Positions 581-606 (EEEEEGEHGETQRAFQCSARSANEHI) are disordered. Residues 593–606 (RAFQCSARSANEHI) show a composition bias toward polar residues.

It belongs to the papillomaviridae E1 protein family. As to quaternary structure, can form hexamers. Interacts with E2 protein; this interaction increases E1 DNA binding specificity. Interacts with host DNA polymerase subunit POLA2. Interacts with host single stranded DNA-binding protein RPA1. Interacts with host TOP1; this interaction stimulates the enzymatic activity of TOP1. Post-translationally, phosphorylated. Sumoylated.

It localises to the host nucleus. The catalysed reaction is Couples ATP hydrolysis with the unwinding of duplex DNA by translocating in the 3'-5' direction.. It carries out the reaction ATP + H2O = ADP + phosphate + H(+). In terms of biological role, ATP-dependent DNA 3'-5' helicase required for initiation of viral DNA replication. It forms a complex with the viral E2 protein. The E1-E2 complex binds to the replication origin which contains binding sites for both proteins. During the initial step, a dimer of E1 interacts with a dimer of protein E2 leading to a complex that binds the viral origin of replication with high specificity. Then, a second dimer of E1 displaces the E2 dimer in an ATP-dependent manner to form the E1 tetramer. Following this, two E1 monomers are added to each half of the site, which results in the formation of two E1 trimers on the viral ori. Subsequently, two hexamers will be created. The double hexamer acts as a bi-directional helicase machinery and unwinds the viral DNA and then recruits the host DNA polymerase to start replication. The sequence is that of Replication protein E1 from Human papillomavirus type RTRX7.